The chain runs to 177 residues: B-phycoerythrin beta chain (177 aa).

Residues K28, N35, D39, C50, D54, C61, N72, 77–78 (RR), C82, R129, 147–148 (SQ), 154–158 (PQGDC), and C158 contribute to the (2R,3E)-phycoerythrobilin site. An N4-methylasparagine modification is found at N72.

The protein belongs to the phycobiliprotein family. As to quaternary structure, heterotetramer of 2 different alpha chains and 2 identical beta chains. The subunit composition could comprise any combination of 2 out of 4 different alpha units with an invariant beta unit. Contains three covalently linked phycoerythrobilin chromophores.

The protein localises to the plastid. It is found in the chloroplast thylakoid membrane. Light-harvesting photosynthetic tetrapyrrole chromophore-protein from the phycobiliprotein complex. The polypeptide is B-phycoerythrin beta chain (cpeB) (Rhodomonas sp. (strain CS 24) (Chroomonas sp. (strain CS24))).